A 764-amino-acid chain; its full sequence is 5-methyltetrahydropteroyltriglutamate--homocysteine methyltransferase (764 aa).

Residues 16–19 (RELK) and lysine 117 contribute to the 5-methyltetrahydropteroyltri-L-glutamate site. Residues 442–444 (IGS) and glutamate 495 each bind L-homocysteine. Residues 442-444 (IGS) and glutamate 495 contribute to the L-methionine site. Residues 526–527 (RC) and tryptophan 572 contribute to the 5-methyltetrahydropteroyltri-L-glutamate site. Aspartate 610 is a binding site for L-homocysteine. Aspartate 610 provides a ligand contact to L-methionine. Glutamate 616 serves as a coordination point for 5-methyltetrahydropteroyltri-L-glutamate. Histidine 652, cysteine 654, and glutamate 676 together coordinate Zn(2+). Catalysis depends on histidine 705, which acts as the Proton donor. Cysteine 737 is a Zn(2+) binding site.

The protein belongs to the vitamin-B12 independent methionine synthase family. Zn(2+) serves as cofactor.

The enzyme catalyses 5-methyltetrahydropteroyltri-L-glutamate + L-homocysteine = tetrahydropteroyltri-L-glutamate + L-methionine. It functions in the pathway amino-acid biosynthesis; L-methionine biosynthesis via de novo pathway; L-methionine from L-homocysteine (MetE route): step 1/1. Catalyzes the transfer of a methyl group from 5-methyltetrahydrofolate to homocysteine resulting in methionine formation. The sequence is that of 5-methyltetrahydropteroyltriglutamate--homocysteine methyltransferase from Bordetella pertussis (strain Tohama I / ATCC BAA-589 / NCTC 13251).